Consider the following 1025-residue polypeptide: Beta-galactosidase (1025 aa).

Residues N105 and D204 each coordinate substrate. Na(+) is bound at residue D204. Mg(2+)-binding residues include E417, H419, and E462. Residues E462 and E538–H541 each bind substrate. E462 acts as the Proton donor in catalysis. E538 functions as the Nucleophile in the catalytic mechanism. N598 is a Mg(2+) binding site. F602 and N605 together coordinate Na(+). The substrate site is built by N605 and W1003.

It belongs to the glycosyl hydrolase 2 family. In terms of assembly, homotetramer. It depends on Mg(2+) as a cofactor. Requires Na(+) as cofactor.

It catalyses the reaction Hydrolysis of terminal non-reducing beta-D-galactose residues in beta-D-galactosides.. The polypeptide is Beta-galactosidase (Aeromonas hydrophila subsp. hydrophila (strain ATCC 7966 / DSM 30187 / BCRC 13018 / CCUG 14551 / JCM 1027 / KCTC 2358 / NCIMB 9240 / NCTC 8049)).